Here is a 232-residue protein sequence, read N- to C-terminus: Uridylate kinase (232 aa).

13–14 (GS) contacts ATP. G52 is a binding site for UMP. ATP contacts are provided by G53 and R57. UMP is bound by residues D74 and 122-128 (LQPGQST). ATP contacts are provided by T147, Y153, and D156.

The protein belongs to the UMP kinase family. As to quaternary structure, homohexamer.

It is found in the cytoplasm. It carries out the reaction UMP + ATP = UDP + ADP. Its pathway is pyrimidine metabolism; CTP biosynthesis via de novo pathway; UDP from UMP (UMPK route): step 1/1. Its activity is regulated as follows. Inhibited by UTP. Catalyzes the reversible phosphorylation of UMP to UDP. The protein is Uridylate kinase of Thermofilum pendens (strain DSM 2475 / Hrk 5).